Here is a 462-residue protein sequence, read N- to C-terminus: uncharacterized protein (462 aa).

Belongs to the IIV-6 329R family.

This is an uncharacterized protein from Aedes vexans (Inland floodwater mosquito).